The primary structure comprises 474 residues: Tubulin gamma-2 chain (474 aa).

142–148 (AGGTGSG) is a binding site for GTP.

Belongs to the tubulin family. Gamma-tubulin complex is composed of gamma-tubulin and GCP proteins.

It localises to the cytoplasm. Its subcellular location is the cytoskeleton. It is found in the microtubule organizing center. The protein localises to the nucleus. The protein resides in the cell cortex. Functionally, tubulin is the major constituent of microtubules. The gamma chain is found at microtubule organizing centers (MTOC) such as the spindle poles, suggesting that it is involved in the minus-end nucleation of microtubule assembly. Gamma-tubulin complex is essential for the control of microtubular network remodeling in the course of initiation and development of giant-feeding cells, and for the successful reproduction of nematodes (e.g. Meloidogyne spp.) in their plant hosts. This is Tubulin gamma-2 chain (TUBG2) from Arabidopsis thaliana (Mouse-ear cress).